Reading from the N-terminus, the 251-residue chain is MPRYVPLLLLLLLLRCSERGGGVNFGEKDAKVPGTWRDGVRVPGEGASWDSDRASPERRYGIVGLSQSISTKHPETSPKDSRIRENDVTADGRTTEDHITADPGTTEDSVTADPGTTEDNVTVDPGTTEGSVTADPATTKDYVSADPGTTKDSVTADPGTTENFVTADPGTTKDSITADPRTTEDSVTADPGTTKHSITVDPGTTEDSVTADPGTTKHSITADPGTTEDSVTADPGTTEDETTKHGDTHLL.

Residues Met1 to Gly22 form the signal peptide. Disordered stretches follow at residues Trp36–Ser55 and Leu65–Leu251. Residues Lys72–Asp87 are compositionally biased toward basic and acidic residues. The N-linked (GlcNAc...) asparagine glycan is linked to Asn120. The segment covering Thr150–Phe164 has biased composition (polar residues). Positions Ser153–Leu251 are 15 X 11 AA approximate repeats. Residues Glu241–Leu251 are compositionally biased toward basic and acidic residues.

In terms of tissue distribution, detected in the brain, lung, spleen, thymus and prostate.

It is found in the secreted. This chain is Protein PBMUCL2 (HCG22), found in Homo sapiens (Human).